The following is a 117-amino-acid chain: MLSAAHRLRDGATFREAIRRGRRAGRQTLVVHLLVGEPVASQPARVGFVVSRAVGNAVIRNQVKRRLRHLAREHVSSLPGSAVLVVRALPPAANASAAELARDLERCLLRVGAEVTG.

It belongs to the RnpA family. In terms of assembly, consists of a catalytic RNA component (M1 or rnpB) and a protein subunit.

The enzyme catalyses Endonucleolytic cleavage of RNA, removing 5'-extranucleotides from tRNA precursor.. Functionally, RNaseP catalyzes the removal of the 5'-leader sequence from pre-tRNA to produce the mature 5'-terminus. It can also cleave other RNA substrates such as 4.5S RNA. The protein component plays an auxiliary but essential role in vivo by binding to the 5'-leader sequence and broadening the substrate specificity of the ribozyme. This is Ribonuclease P protein component from Nocardioides sp. (strain ATCC BAA-499 / JS614).